We begin with the raw amino-acid sequence, 252 residues long: Probable endonuclease 4 (252 aa).

Zn(2+) is bound by residues H56, H96, E129, D162, H165, H191, D204, H206, and E233.

It belongs to the AP endonuclease 2 family. Zn(2+) is required as a cofactor.

The enzyme catalyses Endonucleolytic cleavage to 5'-phosphooligonucleotide end-products.. In terms of biological role, endonuclease IV plays a role in DNA repair. It cleaves phosphodiester bonds at apurinic or apyrimidinic (AP) sites, generating a 3'-hydroxyl group and a 5'-terminal sugar phosphate. The chain is Probable endonuclease 4 from Mycobacterium ulcerans (strain Agy99).